We begin with the raw amino-acid sequence, 349 residues long: Transmembrane protein 255A (349 aa).

The next 4 membrane-spanning stretches (helical) occupy residues 30-50, 57-77, 89-109, and 226-246; these read IYVT…GLAA, VTVG…LGII, LVAS…CAIV, and TILN…LGGF. Positions 303–329 are disordered; the sequence is PSSPPSGLSDEPQSASPSPSYMWSSSA. A compositionally biased stretch (low complexity) spans 316 to 329; that stretch reads SASPSPSYMWSSSA.

Belongs to the TMEM255 family.

The protein resides in the membrane. The sequence is that of Transmembrane protein 255A (TMEM255A) from Homo sapiens (Human).